An 846-amino-acid chain; its full sequence is Leucine--tRNA ligase (846 aa).

The 'HIGH' region motif lies at 47–57; that stretch reads PYPSGRIHMGH. The short motif at 621-625 is the 'KMSKS' region element; sequence KMSKS. Lys624 contacts ATP.

This sequence belongs to the class-I aminoacyl-tRNA synthetase family.

The protein resides in the cytoplasm. It carries out the reaction tRNA(Leu) + L-leucine + ATP = L-leucyl-tRNA(Leu) + AMP + diphosphate. The sequence is that of Leucine--tRNA ligase from Zymomonas mobilis subsp. mobilis (strain ATCC 31821 / ZM4 / CP4).